A 127-amino-acid polypeptide reads, in one-letter code: MFNTLLAVFIGGGVGSMARWLVSLKLNSASAHLPVGTLIVNLVGAFIIGLTLALFSRMTHIDPVWKLLITTGFCGGLTTFSTFSVEVVYLIQEGKLTWAAGTILLNVAGSLAMTMLAFILVNNFASQ.

A run of 4 helical transmembrane segments spans residues Thr4–Leu24, Val35–Phe55, Thr71–Ile91, and Gly101–Val121. Na(+)-binding residues include Gly75 and Thr78.

It belongs to the fluoride channel Fluc/FEX (TC 1.A.43) family.

It localises to the cell inner membrane. The catalysed reaction is fluoride(in) = fluoride(out). With respect to regulation, na(+) is not transported, but it plays an essential structural role and its presence is essential for fluoride channel function. Functionally, fluoride-specific ion channel. Important for reducing fluoride concentration in the cell, thus reducing its toxicity. In Yersinia pseudotuberculosis serotype I (strain IP32953), this protein is Fluoride-specific ion channel FluC 1.